The chain runs to 77 residues: Large ribosomal subunit protein eL20 (77 aa).

It belongs to the eukaryotic ribosomal protein eL20 family. As to quaternary structure, part of the 50S ribosomal subunit. Binds 23S rRNA.

In Thermococcus onnurineus (strain NA1), this protein is Large ribosomal subunit protein eL20.